We begin with the raw amino-acid sequence, 588 residues long: L-fucose isomerase (588 aa).

Residues glutamate 335 and aspartate 359 each act as proton acceptor in the active site. Mn(2+)-binding residues include glutamate 335, aspartate 359, and histidine 525.

It belongs to the L-fucose isomerase family. Mn(2+) is required as a cofactor.

The protein resides in the cytoplasm. It catalyses the reaction L-fucose = L-fuculose. It participates in carbohydrate degradation; L-fucose degradation; L-lactaldehyde and glycerone phosphate from L-fucose: step 1/3. Functionally, converts the aldose L-fucose into the corresponding ketose L-fuculose. The protein is L-fucose isomerase of Streptococcus pneumoniae (strain P1031).